Here is a 328-residue protein sequence, read N- to C-terminus: MPNYINYPSWLHPEVIQGIPITWYSLSYIFIILISYKFIWYQIQSDRIDIKKEDYETFMFSLVLGAILGGRLASTLVYDKSGIYYSHPWLIFLPFDQNWNFTGFRGMAIHGGFLGAIIAPLIIINTKLKNTNVKKYFLKLTDYGSIAFSSGYILGRLANFANAELYGRVMKGGIIFPNAEPFDTNTPGVKEFASSIGLEILPHDLLINLPRIPSQLIEGFFEGPVTCMLLWFLFRKIKKYDGFIFGIYVMLYAFFRFFIEYLREPDKDLGFIINYKPIKSLSEFSFLNISMGQILSLVLMFSGLIWVVVTKKIADKKIKNNTNLAYKN.

Helical transmembrane passes span 15 to 35, 58 to 78, and 106 to 126; these read VIQG…ILIS, FMFS…TLVY, and GMAI…IINT. An a 1,2-diacyl-sn-glycero-3-phospho-(1'-sn-glycerol)-binding site is contributed by arginine 156. 2 helical membrane passes run 242–262 and 289–309; these read GFIF…IEYL and ISMG…WVVV.

This sequence belongs to the Lgt family.

It is found in the cell inner membrane. The enzyme catalyses L-cysteinyl-[prolipoprotein] + a 1,2-diacyl-sn-glycero-3-phospho-(1'-sn-glycerol) = an S-1,2-diacyl-sn-glyceryl-L-cysteinyl-[prolipoprotein] + sn-glycerol 1-phosphate + H(+). It functions in the pathway protein modification; lipoprotein biosynthesis (diacylglyceryl transfer). Its function is as follows. Catalyzes the transfer of the diacylglyceryl group from phosphatidylglycerol to the sulfhydryl group of the N-terminal cysteine of a prolipoprotein, the first step in the formation of mature lipoproteins. The sequence is that of Phosphatidylglycerol--prolipoprotein diacylglyceryl transferase from Borrelia garinii subsp. bavariensis (strain ATCC BAA-2496 / DSM 23469 / PBi) (Borreliella bavariensis).